The primary structure comprises 100 residues: UPF0213 protein YhbQ (100 aa).

The 76-residue stretch at 2–77 folds into the GIY-YIG domain; the sequence is TPWFLYLIRT…KQLTKRQKER (76 aa).

This sequence belongs to the UPF0213 family.

This Escherichia coli (strain K12 / MC4100 / BW2952) protein is UPF0213 protein YhbQ.